A 214-amino-acid chain; its full sequence is Holliday junction branch migration complex subunit RuvA (214 aa).

Residues Met-1–Lys-67 form a domain I region. The interval Ser-68–Ser-146 is domain II. Positions Leu-147–Glu-154 are flexible linker. The domain III stretch occupies residues Gln-155 to Ala-214.

The protein belongs to the RuvA family. In terms of assembly, homotetramer. Forms an RuvA(8)-RuvB(12)-Holliday junction (HJ) complex. HJ DNA is sandwiched between 2 RuvA tetramers; dsDNA enters through RuvA and exits via RuvB. An RuvB hexamer assembles on each DNA strand where it exits the tetramer. Each RuvB hexamer is contacted by two RuvA subunits (via domain III) on 2 adjacent RuvB subunits; this complex drives branch migration. In the full resolvosome a probable DNA-RuvA(4)-RuvB(12)-RuvC(2) complex forms which resolves the HJ.

The protein resides in the cytoplasm. The RuvA-RuvB-RuvC complex processes Holliday junction (HJ) DNA during genetic recombination and DNA repair, while the RuvA-RuvB complex plays an important role in the rescue of blocked DNA replication forks via replication fork reversal (RFR). RuvA specifically binds to HJ cruciform DNA, conferring on it an open structure. The RuvB hexamer acts as an ATP-dependent pump, pulling dsDNA into and through the RuvAB complex. HJ branch migration allows RuvC to scan DNA until it finds its consensus sequence, where it cleaves and resolves the cruciform DNA. In Synechococcus sp. (strain CC9605), this protein is Holliday junction branch migration complex subunit RuvA.